Reading from the N-terminus, the 390-residue chain is Prostaglandin E2 receptor EP3 subtype (390 aa).

Over 1 to 53 (MKETRGYGGDAPFCTRLNHSYTGMWAPERSAEARGNLTRPPGSGEDCGSVSVA) the chain is Extracellular. N-linked (GlcNAc...) asparagine glycosylation is found at Asn18 and Asn36. Residues 54–78 (FPITMLLTGFVGNALAMLLVSRSYR) form a helical membrane-spanning segment. Residues 79–91 (RRESKRKKSFLLC) are Cytoplasmic-facing. A helical transmembrane segment spans residues 92 to 112 (IGWLALTDLVGQLLTTPVVIV). Over 113 to 131 (VYLSKQRWEHIDPSGRLCT) the chain is Extracellular. A helical membrane pass occupies residues 132–153 (FFGLTMTVFGLSSLFIASAMAV). The Cytoplasmic portion of the chain corresponds to 154–175 (ERALAIRAPHWYASHMKTRATR). The chain crosses the membrane as a helical span at residues 176-197 (AVLLGVWLAVLAFALLPVLGVG). The Extracellular segment spans residues 198–227 (QYTVQWPGTWCFISTGRGGNGTSSSHNWGN). A helical transmembrane segment spans residues 228–253 (LFFASAFAFLGLLALTVTFSCNLATI). The Cytoplasmic portion of the chain corresponds to 254-283 (KALVSRCRAKATASQSSAQWGRITTETAIQ). Residues 284–307 (LMGIMCVLSVCWSPLLIMMLKMIF) form a helical membrane-spanning segment. The Extracellular portion of the chain corresponds to 308 to 327 (NQTSVEHCKTHTEKQKECNF). Residues 328 to 349 (FLIAVRLASLNQILDPWVYLLL) form a helical membrane-spanning segment. At 350-390 (RKILLRKFCQIRYHTNNYASSSTSLPCQCSSTLMWSDHLER) the chain is on the cytoplasmic side.

This sequence belongs to the G-protein coupled receptor 1 family. Interacts (via C-terminus) with MKLN1. As to expression, detected in kidney. Expressed in small intestine, heart, pancreas, gastric fundic mucosa, mammary artery and pulmonary vessels.

The protein localises to the cell membrane. Its function is as follows. Receptor for prostaglandin E2 (PGE2). The activity of this receptor can couple to both the inhibition of adenylate cyclase mediated by G(i) proteins, and to an elevation of intracellular calcium. Required for normal development of fever in response to pyrinogens, including IL1B, prostaglandin E2 and bacterial lipopolysaccharide (LPS). Required for normal potentiation of platelet aggregation by prostaglandin E2, and thus plays a role in the regulation of blood coagulation. Required for increased HCO3(-) secretion in the duodenum in response to mucosal acidification, and thereby contributes to the protection of the mucosa against acid-induced ulceration. Not required for normal kidney function, normal urine volume and osmolality. The protein is Prostaglandin E2 receptor EP3 subtype (PTGER3) of Homo sapiens (Human).